A 317-amino-acid polypeptide reads, in one-letter code: MATRHRRRGGSAPSWAKPGKPGERPGGPKKSRGRTSWKSLLIWGVFGVTLGLMAGYYLWGELITDDSVTEVLAAQRDAVAQRFFHVPCSQDYESLKQFEACTPRKCGRAVTDSVITLQEAEKMRRLAEAGLSLGGSDGGASILDLHSGALSMGKKFVNMYRFFGDKLKDVMSDEDFNLYREVRLKIQHEIARTFNISVSSLHLTKPTFFSRMNSSEAKTAHDEYWHPHIDKVTYGSFDYTSLLYLSDYSQDFGGGRFVFIDEGANRTVEPRTGRLSFFTSGSENLHRVEKVSWGTRYAITISFTCNPEHAIGDPTWT.

Residues M1–R34 are disordered. At M1–S39 the chain is on the cytoplasmic side. The chain crosses the membrane as a helical; Signal-anchor for type II membrane protein span at residues L40–G60. Residues E61 to T317 are Lumenal-facing. 2 N-linked (GlcNAc...) asparagine glycosylation sites follow: N195 and N213. Residues K205 to P307 enclose the Fe2OG dioxygenase domain. H228 and D230 together coordinate Fe cation. N265 carries an N-linked (GlcNAc...) asparagine glycan. H286 provides a ligand contact to Fe cation. Residue R296 is part of the active site. R296 provides a ligand contact to 2-oxoglutarate.

Belongs to the OGFOD3 family. Requires Fe(2+) as cofactor. L-ascorbate is required as a cofactor.

It localises to the membrane. This chain is 2-oxoglutarate and iron-dependent oxygenase domain-containing protein 3 (ogfod3), found in Xenopus tropicalis (Western clawed frog).